A 239-amino-acid chain; its full sequence is Ditrans,polycis-undecaprenyl-diphosphate synthase ((2E,6E)-farnesyl-diphosphate specific) (239 aa).

Aspartate 18 is an active-site residue. Position 18 (aspartate 18) interacts with Mg(2+). Residues 19 to 22 (GNGR), tryptophan 23, arginine 31, histidine 35, and 63 to 65 (SSE) each bind substrate. Catalysis depends on asparagine 66, which acts as the Proton acceptor. Residues tryptophan 67, arginine 69, arginine 186, and 192–194 (RIS) each bind substrate. Glutamate 205 serves as a coordination point for Mg(2+).

The protein belongs to the UPP synthase family. Homodimer. The cofactor is Mg(2+).

It catalyses the reaction 8 isopentenyl diphosphate + (2E,6E)-farnesyl diphosphate = di-trans,octa-cis-undecaprenyl diphosphate + 8 diphosphate. Functionally, catalyzes the sequential condensation of isopentenyl diphosphate (IPP) with (2E,6E)-farnesyl diphosphate (E,E-FPP) to yield (2Z,6Z,10Z,14Z,18Z,22Z,26Z,30Z,34E,38E)-undecaprenyl diphosphate (di-trans,octa-cis-UPP). UPP is the precursor of glycosyl carrier lipid in the biosynthesis of bacterial cell wall polysaccharide components such as peptidoglycan and lipopolysaccharide. The polypeptide is Ditrans,polycis-undecaprenyl-diphosphate synthase ((2E,6E)-farnesyl-diphosphate specific) (Haemophilus influenzae (strain ATCC 51907 / DSM 11121 / KW20 / Rd)).